The chain runs to 159 residues: MGVFNVEDEITSVVAPAILYKALVTDADTLTPKVIDAIKSIEIVEGNGGAGTIKKLTFVEDGETKHVLHKVELVDVANLAYNYSIVGGVGFPDTVEKISFEAKLSAGPNGGSIAKLSVKYYTKGDAAAPTEEQLKSDKAKGDGLFKALERYCLAHPDYN.

Belongs to the BetVI family.

The polypeptide is Disease resistance response protein Pi176 (Pisum sativum (Garden pea)).